The following is a 279-amino-acid chain: Proteasome subunit beta (279 aa).

Positions 1 to 51 (MTFDASGRLPEAFLTPGGSSFMDFLAGHAPDLLPGRRSLGTGDLSKDVPHG) are cleaved as a propeptide — removed in mature form; by autocatalysis. Residue threonine 52 is the Nucleophile of the active site.

Belongs to the peptidase T1B family. As to quaternary structure, the 20S proteasome core is composed of 14 alpha and 14 beta subunits that assemble into four stacked heptameric rings, resulting in a barrel-shaped structure. The two inner rings, each composed of seven catalytic beta subunits, are sandwiched by two outer rings, each composed of seven alpha subunits. The catalytic chamber with the active sites is on the inside of the barrel. Has a gated structure, the ends of the cylinder being occluded by the N-termini of the alpha-subunits. Is capped by the proteasome-associated ATPase, ARC.

It localises to the cytoplasm. It carries out the reaction Cleavage of peptide bonds with very broad specificity.. The protein operates within protein degradation; proteasomal Pup-dependent pathway. The formation of the proteasomal ATPase ARC-20S proteasome complex, likely via the docking of the C-termini of ARC into the intersubunit pockets in the alpha-rings, may trigger opening of the gate for substrate entry. Interconversion between the open-gate and close-gate conformations leads to a dynamic regulation of the 20S proteasome proteolysis activity. Functionally, component of the proteasome core, a large protease complex with broad specificity involved in protein degradation. The sequence is that of Proteasome subunit beta from Kribbella flavida (strain DSM 17836 / JCM 10339 / NBRC 14399).